A 556-amino-acid chain; its full sequence is 2-isopropylmalate synthase (556 aa).

Residues proline 33–aspartate 307 enclose the Pyruvate carboxyltransferase domain. 4 residues coordinate Mg(2+): aspartate 42, histidine 246, histidine 248, and asparagine 282. The interval alanine 439–alanine 556 is regulatory domain.

It belongs to the alpha-IPM synthase/homocitrate synthase family. LeuA type 2 subfamily. In terms of assembly, homodimer. It depends on Mg(2+) as a cofactor.

It is found in the cytoplasm. The catalysed reaction is 3-methyl-2-oxobutanoate + acetyl-CoA + H2O = (2S)-2-isopropylmalate + CoA + H(+). It functions in the pathway amino-acid biosynthesis; L-leucine biosynthesis; L-leucine from 3-methyl-2-oxobutanoate: step 1/4. Functionally, catalyzes the condensation of the acetyl group of acetyl-CoA with 3-methyl-2-oxobutanoate (2-ketoisovalerate) to form 3-carboxy-3-hydroxy-4-methylpentanoate (2-isopropylmalate). This Pseudomonas syringae pv. tomato (strain ATCC BAA-871 / DC3000) protein is 2-isopropylmalate synthase.